We begin with the raw amino-acid sequence, 564 residues long: Dihydroxy-acid dehydratase (564 aa).

Cys-53 contributes to the [2Fe-2S] cluster binding site. Asp-85 lines the Mg(2+) pocket. A [2Fe-2S] cluster-binding site is contributed by Cys-126. Mg(2+) contacts are provided by Asp-127 and Lys-128. At Lys-128 the chain carries N6-carboxylysine. Cys-203 provides a ligand contact to [2Fe-2S] cluster. A Mg(2+)-binding site is contributed by Glu-454. Ser-480 functions as the Proton acceptor in the catalytic mechanism.

It belongs to the IlvD/Edd family. As to quaternary structure, homodimer. [2Fe-2S] cluster serves as cofactor. The cofactor is Mg(2+).

The catalysed reaction is (2R)-2,3-dihydroxy-3-methylbutanoate = 3-methyl-2-oxobutanoate + H2O. It catalyses the reaction (2R,3R)-2,3-dihydroxy-3-methylpentanoate = (S)-3-methyl-2-oxopentanoate + H2O. The protein operates within amino-acid biosynthesis; L-isoleucine biosynthesis; L-isoleucine from 2-oxobutanoate: step 3/4. Its pathway is amino-acid biosynthesis; L-valine biosynthesis; L-valine from pyruvate: step 3/4. Its function is as follows. Functions in the biosynthesis of branched-chain amino acids. Catalyzes the dehydration of (2R,3R)-2,3-dihydroxy-3-methylpentanoate (2,3-dihydroxy-3-methylvalerate) into 2-oxo-3-methylpentanoate (2-oxo-3-methylvalerate) and of (2R)-2,3-dihydroxy-3-methylbutanoate (2,3-dihydroxyisovalerate) into 2-oxo-3-methylbutanoate (2-oxoisovalerate), the penultimate precursor to L-isoleucine and L-valine, respectively. The polypeptide is Dihydroxy-acid dehydratase (Leifsonia xyli subsp. xyli (strain CTCB07)).